The primary structure comprises 397 residues: Elongation factor Tu (397 aa).

The tr-type G domain occupies 10-207; sequence LPHVNVGTIG…TLDSYIPDPV (198 aa). The G1 stretch occupies residues 19-26; it reads GHVDHGKT. 19–26 provides a ligand contact to GTP; it reads GHVDHGKT. T26 is a Mg(2+) binding site. Residues 60-64 are G2; it reads GITIN. A G3 region spans residues 81–84; sequence DCPG. GTP-binding positions include 81 to 85 and 136 to 139; these read DCPGH and NKAD. Residues 136-139 form a G4 region; the sequence is NKAD. The segment at 174-176 is G5; sequence SAR.

The protein belongs to the TRAFAC class translation factor GTPase superfamily. Classic translation factor GTPase family. EF-Tu/EF-1A subfamily. Monomer.

The protein resides in the cytoplasm. The catalysed reaction is GTP + H2O = GDP + phosphate + H(+). Its function is as follows. GTP hydrolase that promotes the GTP-dependent binding of aminoacyl-tRNA to the A-site of ribosomes during protein biosynthesis. In Pseudomonas fluorescens (strain SBW25), this protein is Elongation factor Tu.